A 347-amino-acid polypeptide reads, in one-letter code: GTPase Obg (347 aa).

One can recognise an Obg domain in the interval 1-159 (MKFVDEATIK…RVLRLELKLL (159 aa)). The interval 127-146 (NTRYKTSTNRAPRQSKPGTP) is disordered. The span at 129-138 (RYKTSTNRAP) shows a compositional bias: polar residues. An OBG-type G domain is found at 160–334 (ADVGLLGLPN…LMQAIMKYLE (175 aa)). GTP contacts are provided by residues 166–173 (GLPNAGKS), 191–195 (FTTLY), 213–216 (DIPG), 284–287 (NKID), and 315–317 (SAA). Residues S173 and T193 each coordinate Mg(2+).

It belongs to the TRAFAC class OBG-HflX-like GTPase superfamily. OBG GTPase family. In terms of assembly, monomer. It depends on Mg(2+) as a cofactor.

Its subcellular location is the cytoplasm. Functionally, an essential GTPase which binds GTP, GDP and possibly (p)ppGpp with moderate affinity, with high nucleotide exchange rates and a fairly low GTP hydrolysis rate. Plays a role in control of the cell cycle, stress response, ribosome biogenesis and in those bacteria that undergo differentiation, in morphogenesis control. The sequence is that of GTPase Obg from Thioalkalivibrio sulfidiphilus (strain HL-EbGR7).